A 123-amino-acid chain; its full sequence is Small ribosomal subunit protein uS12cz/uS12cy (123 aa).

Belongs to the universal ribosomal protein uS12 family. In terms of assembly, part of the 30S ribosomal subunit.

The protein resides in the plastid. Its subcellular location is the chloroplast. Functionally, with S4 and S5 plays an important role in translational accuracy. Located at the interface of the 30S and 50S subunits. This Populus alba (White poplar) protein is Small ribosomal subunit protein uS12cz/uS12cy (rps12-A).